We begin with the raw amino-acid sequence, 243 residues long: Aquaporin SIP1-2 (243 aa).

The next 2 helical transmembrane spans lie at 9 to 29 (AAAADAVVTFLWVLCVSTLGA) and 45 to 65 (FALLVTVSLLSVLLFVFNILC). An NPA 1 motif is present at residues 74 to 76 (NPT). 3 helical membrane-spanning segments follow: residues 98–118 (LPAQAAGAVGGALAISELMPA), 136–156 (GAGAELVLTFVITLAVLLIIV), and 163–183 (IIKTWMISICTLCLVLSGAAY). Positions 189-191 (NPA) match the NPA 2 motif. The chain crosses the membrane as a helical span at residues 211–231 (VYWICPFIGAILAAWIFRAMF).

The protein belongs to the MIP/aquaporin (TC 1.A.8) family. SIP (TC 1.A.8.10) subfamily.

The protein resides in the membrane. Functionally, aquaporins facilitate the transport of water and small neutral solutes across cell membranes. This is Aquaporin SIP1-2 (SIP1-2) from Zea mays (Maize).